The chain runs to 176 residues: RNA pyrophosphohydrolase (176 aa).

The Nudix hydrolase domain maps to 6-149 (GYRPNVGIIL…KRQVYQQALF (144 aa)). The Nudix box motif lies at 38-59 (GGIKHGESPEQAMFRELFEEVG).

The protein belongs to the Nudix hydrolase family. RppH subfamily. A divalent metal cation is required as a cofactor.

Accelerates the degradation of transcripts by removing pyrophosphate from the 5'-end of triphosphorylated RNA, leading to a more labile monophosphorylated state that can stimulate subsequent ribonuclease cleavage. The polypeptide is RNA pyrophosphohydrolase (Aromatoleum aromaticum (strain DSM 19018 / LMG 30748 / EbN1) (Azoarcus sp. (strain EbN1))).